The sequence spans 409 residues: Peptidase T (409 aa).

Residue H78 participates in Zn(2+) binding. The active site involves D80. D140 is a binding site for Zn(2+). E173 acts as the Proton acceptor in catalysis. Zn(2+) contacts are provided by E174, D196, and H379.

The protein belongs to the peptidase M20B family. The cofactor is Zn(2+).

It localises to the cytoplasm. It carries out the reaction Release of the N-terminal residue from a tripeptide.. Functionally, cleaves the N-terminal amino acid of tripeptides. This Salmonella heidelberg (strain SL476) protein is Peptidase T.